A 103-amino-acid chain; its full sequence is MNFWAAFSACLVGYLVYSGRLNGELQEIKSILIIAYEAADKRYRGVIDEIESLKTDTFMMLSNLQNNTIRTWDAVAKNGKKIANLDERVNGLLAKHAVPALVR.

In Orgyia pseudotsugata multicapsid polyhedrosis virus (OpMNPV), this protein is GP16 protein (GP16).